A 1082-amino-acid chain; its full sequence is DNA-directed RNA polymerase subunit beta (1082 aa).

It belongs to the RNA polymerase beta chain family. In terms of assembly, in plastids the minimal PEP RNA polymerase catalytic core is composed of four subunits: alpha, beta, beta', and beta''. When a (nuclear-encoded) sigma factor is associated with the core the holoenzyme is formed, which can initiate transcription.

The protein resides in the plastid. It localises to the chloroplast. It carries out the reaction RNA(n) + a ribonucleoside 5'-triphosphate = RNA(n+1) + diphosphate. DNA-dependent RNA polymerase catalyzes the transcription of DNA into RNA using the four ribonucleoside triphosphates as substrates. The protein is DNA-directed RNA polymerase subunit beta of Euglena gracilis.